The following is a 673-amino-acid chain: Protein kinase ORF74 (673 aa).

The 277-residue stretch at 128–404 (TDTDEAVARG…ARELLVYPRY (277 aa)) folds into the Protein kinase domain. Catalysis depends on aspartate 252, which acts as the Proton acceptor. Residues 340–364 (MDNDALDSRRTGRDGDPVNPEGFGT) form a disordered region. The span at 345 to 355 (LDSRRTGRDGD) shows a compositional bias: basic and acidic residues.

The protein belongs to the protein kinase superfamily. Ser/Thr protein kinase family.

The enzyme catalyses L-seryl-[protein] + ATP = O-phospho-L-seryl-[protein] + ADP + H(+). The catalysed reaction is L-threonyl-[protein] + ATP = O-phospho-L-threonyl-[protein] + ADP + H(+). This chain is Protein kinase ORF74 (ORF74), found in Ictalurid herpesvirus 1 (strain Auburn) (IcHV-1).